The primary structure comprises 348 residues: Zinc transporter ZIP13 (348 aa).

Residues 1–45 are Cytoplasmic-facing; sequence MMIQTAVAQAKTAPAGPGPWSIKDLVDLQYLDELMSIDNLDVWFC. The helical transmembrane segment at 46–66 threads the bilayer; that stretch reads SLVGSIAIGLSGIFPLLVIPI. The Lumenal portion of the chain corresponds to 67-83; the sequence is EAGTALKTEAGCQKLKK. The chain crosses the membrane as a helical span at residues 84–104; it reads LLSFAIGGLLGDVFLHLLPEA. Topologically, residues 105-118 are cytoplasmic; that stretch reads WAYTSSPGGSHRHY. Residues 119–139 traverse the membrane as a helical segment; the sequence is CTQGLWVIGGLMSFLTLEKMF. At 140–219 the chain is on the lumenal side; sequence PDEVGDPETK…CIDNFTHGLA (80 aa). Residues 144–192 are disordered; the sequence is GDPETKTSFQRTTSSSSDLSSQFSVSPQTNGICSNNNSDSKPKTDISPY. Low complexity predominate over residues 149-169; that stretch reads KTSFQRTTSSSSDLSSQFSVS. The span at 170-182 shows a compositional bias: polar residues; the sequence is PQTNGICSNNNSD. Residues 220 to 240 form a helical membrane-spanning segment; sequence VAGSFLVSRKVGFLTTFAILL. The XEXPHE-motif motif lies at 241 to 246; the sequence is HEIPHE. Residues 241–262 lie on the Cytoplasmic side of the membrane; the sequence is HEIPHEVGDFAILLRAGFDRWK. A helical transmembrane segment spans residues 263-283; it reads AARMQLSTALGGVLGACFALC. Over 284–294 the chain is Lumenal; it reads SQSQHGAENAT. Residues 295-315 traverse the membrane as a helical segment; sequence TWILPFTSGGFLYIALVNVVP. Residues 316–326 are Cytoplasmic-facing; sequence DLLEETNPRNS. A helical transmembrane segment spans residues 327–347; that stretch reads LLQVLLLFSGIGVMALLSIAM. D348 is a topological domain (lumenal).

It belongs to the ZIP transporter (TC 2.A.5) family. In terms of assembly, homodimer.

Its subcellular location is the golgi apparatus membrane. The protein resides in the cytoplasmic vesicle membrane. The protein localises to the endoplasmic reticulum membrane. The catalysed reaction is Zn(2+)(in) = Zn(2+)(out). In terms of biological role, functions as a zinc transporter transporting Zn(2+) from the Golgi apparatus to the cytosol and thus influences the zinc level at least in areas of the cytosol. In Danio rerio (Zebrafish), this protein is Zinc transporter ZIP13.